The following is a 566-amino-acid chain: OTU domain-containing protein 5 (566 aa).

2 disordered regions span residues 1–117 (MTIL…GDAL) and 146–175 (PGHS…GAGY). Positions 11–30 (PPDADPANEPPPPGPLPPAP) are enriched in pro residues. A compositionally biased stretch (gly residues) spans 32-47 (RGGGVGVGGGGTGVGG). The span at 63 to 75 (ASPPPQGPLPGPP) shows a compositional bias: pro residues. Serine 64 bears the Phosphoserine mark. A compositionally biased stretch (low complexity) spans 84–97 (AVPPGAVAGPRPQQ). A compositionally biased stretch (gly residues) spans 105-115 (GPGGPGGGPGD). Position 165 is a phosphoserine (serine 165). Tyrosine 175 bears the Phosphotyrosine mark. Residue serine 177 is modified to Phosphoserine. Residue threonine 195 is modified to Phosphothreonine. In terms of domain architecture, OTU spans 213–336 (FIIKQMKEDG…NIHYNSVVNP (124 aa)). Residues 218–224 (MKEDGAC) are cys-loop. Aspartate 221 is a catalytic residue. The active-site Nucleophile is the cysteine 224. Residues 273–283 (KRKNNCHGNHI) form a variable-loop region. A Phosphoserine modification is found at serine 323. The tract at residues 324–329 (YHRNIH) is his-loop. Histidine 329 is a catalytic residue. Serine 332 and serine 370 each carry phosphoserine. The tract at residues 413 to 497 (ARQVRGPSQP…PGTSSQFSAG (85 aa)) is disordered. 2 stretches are compositionally biased toward low complexity: residues 425–438 (ASAT…AASS) and 445–457 (SRSP…ASSP). Residue serine 447 is modified to Phosphoserine. Threonine 502 carries the post-translational modification Phosphothreonine. At serine 503 the chain carries Phosphoserine.

Belongs to the peptidase C85 family. In terms of assembly, interacts with TRAF3. Post-translationally, phosphorylation at Ser-177 is required for deubiquitinating activity. Phosphorylation at Ser-323, Ser-332 and Ser-503 by MTOR promotes its activity.

The protein resides in the nucleus. It catalyses the reaction Thiol-dependent hydrolysis of ester, thioester, amide, peptide and isopeptide bonds formed by the C-terminal Gly of ubiquitin (a 76-residue protein attached to proteins as an intracellular targeting signal).. Its activity is regulated as follows. Inhibited by N-ethyl-maleimide (NEM). Functionally, deubiquitinating enzyme that functions as a negative regulator of the innate immune system. Has peptidase activity towards 'Lys-48'- and 'Lys-63'-linked polyubiquitin chains. Can also cleave 'Lys-11'-linked ubiquitin chains (in vitro). Acts via TRAF3 deubiquitination and subsequent suppression of type I interferon (IFN) production. Controls neuroectodermal differentiation through cleaving 'Lys-48'-linked ubiquitin chains to counteract degradation of select chromatin regulators such as ARID1A, HDAC2 and HCF1. Acts as a positive regulator of mTORC1 and mTORC2 signaling following phosphorylation by MTOR: acts by mediating deubiquitination of BTRC, leading to its stability. The polypeptide is OTU domain-containing protein 5 (Rattus norvegicus (Rat)).